A 244-amino-acid polypeptide reads, in one-letter code: Methanethiol S-methyltransferase (244 aa).

5 helical membrane passes run 7 to 27 (IIYG…AIGF), 41 to 61 (IAAP…VFAV), 90 to 110 (LLAS…PAVI), 120 to 140 (VALW…TFMI), and 181 to 201 (GFVV…LFAI).

It belongs to the nurim family.

Its subcellular location is the membrane. The enzyme catalyses methanethiol + S-adenosyl-L-methionine = dimethyl sulfide + S-adenosyl-L-homocysteine + H(+). Catalyzes the methylation of methanethiol (MeSH) to yield dimethylsulphide (DMS). This is Methanethiol S-methyltransferase from Mycobacterium tuberculosis (strain ATCC 25618 / H37Rv).